A 220-amino-acid chain; its full sequence is Large ribosomal subunit protein uL16 (220 aa).

The protein belongs to the universal ribosomal protein uL16 family. In terms of assembly, component of the large ribosomal subunit. Mature ribosomes consist of a small (40S) and a large (60S) subunit. The 40S subunit contains about 32 different proteins and 1 molecule of RNA (18S). The 60S subunit contains 45 different proteins and 3 molecules of RNA (25S, 5.8S and 5S).

The protein localises to the cytoplasm. Functionally, component of the ribosome, a large ribonucleoprotein complex responsible for the synthesis of proteins in the cell. The small ribosomal subunit (SSU) binds messenger RNAs (mRNAs) and translates the encoded message by selecting cognate aminoacyl-transfer RNA (tRNA) molecules. The large subunit (LSU) contains the ribosomal catalytic site termed the peptidyl transferase center (PTC), which catalyzes the formation of peptide bonds, thereby polymerizing the amino acids delivered by tRNAs into a polypeptide chain. The nascent polypeptides leave the ribosome through a tunnel in the LSU and interact with protein factors that function in enzymatic processing, targeting, and the membrane insertion of nascent chains at the exit of the ribosomal tunnel. The sequence is that of Large ribosomal subunit protein uL16 from Candida albicans (strain SC5314 / ATCC MYA-2876) (Yeast).